Consider the following 309-residue polypeptide: Probable manganese-dependent inorganic pyrophosphatase (309 aa).

Residues H9, D13, D15, D75, H97, and D149 each contribute to the Mn(2+) site.

Belongs to the PPase class C family. It depends on Mn(2+) as a cofactor.

It is found in the cytoplasm. It catalyses the reaction diphosphate + H2O = 2 phosphate + H(+). This is Probable manganese-dependent inorganic pyrophosphatase from Exiguobacterium sp. (strain ATCC BAA-1283 / AT1b).